The chain runs to 338 residues: Phenylalanine--tRNA ligase alpha subunit (338 aa).

Mg(2+) is bound at residue Glu252.

The protein belongs to the class-II aminoacyl-tRNA synthetase family. Phe-tRNA synthetase alpha subunit type 1 subfamily. In terms of assembly, tetramer of two alpha and two beta subunits. Mg(2+) is required as a cofactor.

It is found in the cytoplasm. The enzyme catalyses tRNA(Phe) + L-phenylalanine + ATP = L-phenylalanyl-tRNA(Phe) + AMP + diphosphate + H(+). The polypeptide is Phenylalanine--tRNA ligase alpha subunit (Mycoplasmoides gallisepticum (strain R(low / passage 15 / clone 2)) (Mycoplasma gallisepticum)).